A 223-amino-acid polypeptide reads, in one-letter code: Adenylate kinase 4, mitochondrial (223 aa).

15 to 20 serves as a coordination point for a ribonucleoside 5'-triphosphate; sequence GSGKGT. The segment at 35 to 64 is NMP; sequence SSGHFLRENIKASTEVGEMAKQYIEKSLLV. Residues Ser36 and Arg41 each coordinate AMP. At Lys60 the chain carries N6-succinyllysine. Residues 62–64, 89–92, and Gln96 contribute to the AMP site; these read LLV and GFPR. The segment at 125–162 is LID; it reads RRWIHPPSGRVYNLDFNPPHVHGIDDVTGEPLVQQEDD. Residues Arg126 and 135 to 136 each bind a ribonucleoside 5'-triphosphate; that span reads VY. Arg170 is an AMP binding site. Lys175 bears the N6-acetyllysine mark. 2 positions are modified to N6-acetyllysine; alternate: Lys179 and Lys186. N6-succinyllysine; alternate is present on residues Lys179 and Lys186. Thr199 serves as a coordination point for a ribonucleoside 5'-triphosphate.

This sequence belongs to the adenylate kinase family. AK3 subfamily. Monomer. Interacts with SLC25A5/ANT2. Highly expressed in kidney, moderately expressed in heart and liver and weakly expressed in brain.

It localises to the mitochondrion matrix. The catalysed reaction is a ribonucleoside 5'-phosphate + ATP = a ribonucleoside 5'-diphosphate + ADP. It carries out the reaction AMP + ATP = 2 ADP. It catalyses the reaction GTP + AMP = GDP + ADP. The enzyme catalyses CMP + ATP = CDP + ADP. The catalysed reaction is GTP + CMP = CDP + GDP. It carries out the reaction dAMP + ATP = dADP + ADP. It catalyses the reaction dCMP + ATP = dCDP + ADP. The enzyme catalyses a 2'-deoxyribonucleoside 5'-diphosphate + ATP = a 2'-deoxyribonucleoside 5'-triphosphate + ADP. The catalysed reaction is a ribonucleoside 5'-diphosphate + ATP = a ribonucleoside 5'-triphosphate + ADP. It carries out the reaction GDP + ATP = GTP + ADP. It catalyses the reaction CDP + GTP = CTP + GDP. The enzyme catalyses CDP + ATP = CTP + ADP. The catalysed reaction is UDP + ATP = UTP + ADP. It carries out the reaction GTP + UDP = UTP + GDP. It catalyses the reaction dADP + GTP = dATP + GDP. The enzyme catalyses dCDP + GTP = dCTP + GDP. The catalysed reaction is dCDP + ATP = dCTP + ADP. It carries out the reaction dGDP + ATP = dGTP + ADP. It catalyses the reaction dTDP + GTP = dTTP + GDP. The enzyme catalyses dTDP + ATP = dTTP + ADP. Functionally, broad-specificity mitochondrial nucleoside phosphate kinase involved in cellular nucleotide homeostasis by catalyzing nucleoside-phosphate interconversions. Similar to other adenylate kinases, preferentially catalyzes the phosphorylation of the nucleoside monophosphate AMP with ATP as phosphate donor to produce ADP. Phosphorylates only AMP when using GTP as phosphate donor. In vitro, can also catalyze the phosphorylation of CMP, dAMP and dCMP and use GTP as an alternate phosphate donor. Moreover, exhibits a diphosphate kinase activity, producing ATP, CTP, GTP, UTP, TTP, dATP, dCTP and dGTP from the corresponding diphosphate substrates with either ATP or GTP as phosphate donors. Plays a role in controlling cellular ATP levels by regulating phosphorylation and activation of the energy sensor protein kinase AMPK. Plays a protective role in the cellular response to oxidative stress. This Homo sapiens (Human) protein is Adenylate kinase 4, mitochondrial.